A 1817-amino-acid polypeptide reads, in one-letter code: Breast cancer type 1 susceptibility protein homolog (1817 aa).

An N-acetylmethionine modification is found at methionine 1. The RING-type zinc finger occupies 24–65; it reads CPICLELIKEPVSTQCDHIFCKFCMLKLLNQKKGPSQCPLCK. A Glycyl lysine isopeptide (Lys-Gly) (interchain with G-Cter in SUMO2) cross-link involves residue lysine 109. Serine 114 carries the phosphoserine modification. Lysine 299 participates in a covalent cross-link: Glycyl lysine isopeptide (Lys-Gly) (interchain with G-Cter in SUMO2). Residues 305 to 346 are disordered; it reads RSKQSGAAVSQQSRWADSKETCNGRPVPRTEGKADPNVDSLC. Positions 308-319 are enriched in polar residues; that stretch reads QSGAAVSQQSRW. The span at 320 to 340 shows a compositional bias: basic and acidic residues; that stretch reads ADSKETCNGRPVPRTEGKADP. Lysine 337 participates in a covalent cross-link: Glycyl lysine isopeptide (Lys-Gly) (interchain with G-Cter in SUMO2). Serine 393 is modified (phosphoserine). Lysine 457 participates in a covalent cross-link: Glycyl lysine isopeptide (Lys-Gly) (interchain with G-Cter in SUMO2). A Nuclear localization signal motif is present at residues 497 to 503; sequence KLKRKRS. Glycyl lysine isopeptide (Lys-Gly) (interchain with G-Cter in SUMO2) cross-links involve residues lysine 513 and lysine 578. Positions 640-652 are enriched in polar residues; the sequence is SEETKKNNSNQTP. Disordered stretches follow at residues 640–720, 735–768, 874–907, and 959–982; these read SEET…SPER, NKEL…PDTD, LVGA…SEIS, and GISQ…TDNR. A compositionally biased stretch (basic and acidic residues) spans 669 to 679; that stretch reads ADAKKNEPNEH. Phosphoserine occurs at positions 686, 706, and 717. Low complexity predominate over residues 744-760; sequence GGEPSGKPTEPSEESTS. Over residues 891-901 the composition is skewed to basic and acidic residues; it reads SRGEQKERQGQ. The segment covering 959-976 has biased composition (polar residues); that stretch reads GISQNSHFRQSVSPLRSS. The residue at position 975 (serine 975) is a Phosphoserine; by CHEK2. A Glycyl lysine isopeptide (Lys-Gly) (interchain with G-Cter in SUMO2) cross-link involves residue lysine 1049. A disordered region spans residues 1146 to 1185; that stretch reads LRRESSRSPSPVTHASKSRSLHRGSRKLEFSEESDSTEDE. Phosphoserine is present on residues serine 1153 and serine 1155. Basic residues predominate over residues 1161–1170; that stretch reads SKSRSLHRGS. Residues 1176–1185 show a composition bias toward acidic residues; the sequence is SEESDSTEDE. Phosphoserine is present on residues serine 1181 and serine 1242. A disordered region spans residues 1259–1290; that stretch reads SSQHSAALGSPANALSQDPDFNPPSKQRRHQA. Serine 1298, serine 1304, and serine 1344 each carry phosphoserine. Position 1351 is a phosphothreonine (threonine 1351). Positions 1354–1381 are interaction with PALB2; the sequence is RATMKDNLIKLQQEMAQLEAVLEQHGSQ. Disordered stretches follow at residues 1375–1486 and 1498–1534; these read LEQH…QEEL and PHNL…DSES. Residues serine 1380, serine 1414, and serine 1482 each carry the phosphoserine modification. Polar residues-rich tracts occupy residues 1405-1426 and 1473-1485; these read NRSG…SQNP and RSLQ…SQEE. BRCT domains follow at residues 1588 to 1682 and 1701 to 1800; these read PKER…EFEV and SQEK…AYLV.

Heterodimer with BARD1. Part of the BRCA1-associated genome surveillance complex (BASC), which contains BRCA1, MSH2, MSH6, MLH1, ATM, BLM, PMS2 and the MRE11-RAD50-NBN protein (MRN) complex. This association could be a dynamic process changing throughout the cell cycle and within subnuclear domains. Component of the BRCA1-A complex, at least composed of BRCA1, BARD1, UIMC1/RAP80, ABRAXAS1, BRCC3/BRCC36, BABAM2 and BABAM1/NBA1. Interacts (via the BRCT domains) with ABRAXAS1 (phosphorylated form); this is important for recruitment to sites of DNA damage. Can form a heterotetramer with two molecules of ABRAXAS1 (phosphorylated form). Component of the BRCA1-RBBP8 complex. Interacts (via the BRCT domains) with RBBP8 ('Ser-327' phosphorylated form); the interaction ubiquitinates RBBP8, regulates CHEK1 activation, and involves RBBP8 in BRCA1-dependent G2/M checkpoint control on DNA damage. Associates with RNA polymerase II holoenzyme. Interacts with SMC1A, NELFB, DCLRE1C, CLSPN. CHEK1, CHEK2, BAP1, BRCC3, UBXN1 and PCLAF. Interacts (via BRCT domains) with BRIP1 (phosphorylated form). Interacts with FANCD2 (ubiquitinated form). Interacts with H2AX (phosphorylated on 'Ser-140'). Interacts (via the BRCT domains) with ACACA (phosphorylated form); the interaction prevents dephosphorylation of ACACA. Part of a BRCA complex containing BRCA1, BRCA2 and PALB2. Interacts directly with PALB2; the interaction is essential for its function in HRR. Interacts directly with BRCA2; the interaction occurs only in the presence of PALB2 which serves as the bridging protein. Interacts (via the BRCT domains) with LMO4; the interaction represses the transcriptional activity of BRCA1. Interacts (via the BRCT domains) with CCAR2 (via N-terminus); the interaction represses the transcriptional activator activity of BRCA1. Interacts with EXD2. Interacts (via C-terminus) with DHX9; this interaction is direct and links BRCA1 to the RNA polymerase II holoenzyme. Interacts with DNA helicase ZGRF1; the interaction is increased following DNA damage induction. Phosphorylated in response to IR, UV, and various stimuli that cause checkpoint activation, probably by ATM or ATR. Phosphorylation at Ser-975 by CHEK2 regulates mitotic spindle assembly. Phosphorylation by AURKA regulates centrosomal microtubule nucleation. Post-translationally, autoubiquitinated, undergoes 'Lys-6'-linked polyubiquitination. 'Lys-6'-linked polyubiquitination does not promote degradation.

Its subcellular location is the nucleus. It is found in the chromosome. The protein localises to the cytoplasm. It catalyses the reaction S-ubiquitinyl-[E2 ubiquitin-conjugating enzyme]-L-cysteine + [acceptor protein]-L-lysine = [E2 ubiquitin-conjugating enzyme]-L-cysteine + N(6)-ubiquitinyl-[acceptor protein]-L-lysine.. It functions in the pathway protein modification; protein ubiquitination. Functionally, E3 ubiquitin-protein ligase that specifically mediates the formation of 'Lys-6'-linked polyubiquitin chains and plays a central role in DNA repair by facilitating cellular responses to DNA damage. It is unclear whether it also mediates the formation of other types of polyubiquitin chains. The BRCA1-BARD1 heterodimer coordinates a diverse range of cellular pathways such as DNA damage repair, ubiquitination and transcriptional regulation to maintain genomic stability. Regulates centrosomal microtubule nucleation. Required for appropriate cell cycle arrests after ionizing irradiation in both the S-phase and the G2 phase of the cell cycle. Required for FANCD2 targeting to sites of DNA damage. Inhibits lipid synthesis by binding to inactive phosphorylated ACACA and preventing its dephosphorylation. Contributes to homologous recombination repair (HRR) via its direct interaction with PALB2, fine-tunes recombinational repair partly through its modulatory role in the PALB2-dependent loading of BRCA2-RAD51 repair machinery at DNA breaks. Component of the BRCA1-RBBP8 complex which regulates CHEK1 activation and controls cell cycle G2/M checkpoints on DNA damage via BRCA1-mediated ubiquitination of RBBP8. Acts as a transcriptional activator. In Rattus norvegicus (Rat), this protein is Breast cancer type 1 susceptibility protein homolog (Brca1).